A 318-amino-acid chain; its full sequence is L-lactate dehydrogenase (318 aa).

Residues Val15, Asp36, and Lys41 each coordinate NAD(+). Residue Arg89 participates in substrate binding. Residues Ser102, 119–121 (ITN), and Thr144 each bind NAD(+). 121-124 (NPVD) contributes to the substrate binding site. Residue 149–152 (DSAR) participates in substrate binding. Residue His176 is the Proton acceptor of the active site. Thr231 lines the substrate pocket.

This sequence belongs to the LDH/MDH superfamily. LDH family. In terms of assembly, homotetramer.

It is found in the cytoplasm. The enzyme catalyses (S)-lactate + NAD(+) = pyruvate + NADH + H(+). It participates in fermentation; pyruvate fermentation to lactate; (S)-lactate from pyruvate: step 1/1. In terms of biological role, catalyzes the conversion of lactate to pyruvate. The sequence is that of L-lactate dehydrogenase from Fusobacterium nucleatum subsp. nucleatum (strain ATCC 25586 / DSM 15643 / BCRC 10681 / CIP 101130 / JCM 8532 / KCTC 2640 / LMG 13131 / VPI 4355).